The primary structure comprises 2711 residues: MKMKIQKKEKQLSKLRALNHSPMSDASVNFDYKSPSPFDCSPDQGENIEEAANHCLPHKNLYTTEEEADTLFSRKLTSHNGMEDSGGRGTGVKKKRKKKEPGEQEGTKGSKDREPKPKRKREPKEPKEPRRAKEPKRAKEPKETKQKDGVKKPRKHREASGTKEGKEKRSCTDYGSRTKSKKASREQGPTPVERKKKGKRKNETTVESLELDHSLPNPSLQSPEEPSESADSQKRRSGRQVKRRKYNEDLDFKVVDDDGETIAVLGAGRTSALSASTLAWQAEEPPEDDANIIEKILASKTVQEVHPGEPPFDLELFYVKYRNFSYLHCKWATMEELEKDPRIAQKIKRFRNKQAQMKHIFTEPDEDLFNPDYIEIDRILEVAHTKDAETGEEVTHYLVKWCSLPYEESTWELEEDVDPAKVKEFESLQILPEVKHVERPASDAWQKLETSREYRNSNRLREYQLEGMNWLLFNWYNRKNCILADEMGLGKTIQSIAFLSEIFVRGIHGPFLIIAPLSTITNWEREFRTWTEMNAIVYHGSQISRQMIQQYEMVYRDAQGNPLSGVFKFHVVITTFEMILADCPELKKIHWSCVIIDEAHRLKNRNCKLLEGLKLMALEHKVLLTGTPLQNSVEELFSLLNFLEPSQFPSETAFLEEFGDLKTEEQVKKLQSILKPMMLRRLKDDVEKNLAPKQETIIEVELTNIQKKYYRAILEKNFSFLTKGANQHNMPNLINTMMELRKCCNHPYLINGAEEKILEDFRKAHSSEASDFQLQAMIQAAGKLVLIDKLLPKLIAGGHKVLIFSQMVRCLDILEDYLIQRRYTYERIDGRVRGNLRQAAIDRFCKPDSDRFVFLLCTRAGGLGINLTAADTCIIFDSDWNPQNDLQAQARCHRIGQSKAVKVYRLITRNSYEREMFDKASLKLGLDKAILQDINRKGSTNGVQQLSKMEVEDLLRKGAYGALMDEEDEGSKFCEEDIDQILQRRTHTITIQSEGKGSTFAKASFVASGNRTDISLDDPNFWQKWAKIAELDTEANNEKESLVIDRPRVRKQTKHYNSFEEDELMEFSELDSDSDERPTRSRRLSDRARRYLRAECFRVEKNLLIFGWGRWKDILTHGRFKWPLNEKDMEMICRALLVYCVKHYKGDEKIKSFIWELITPSKDGQVQTLQNHSGLSAPVPRGRKGKKTKNQLLLPELKNADWLATCNPEVVLHDDGYKKHLKQHCNKVLLRVRMLYYLKAEILGEAADKAFEGTPARELDVLLPDIDYVEIPVDWWDAEADKSLLIGVFKHGYERYNAMRADPALCFLEKVGMPDEKSLSAEQGVTDGTSDIPERGNIDKEDSAEDKLDGLQKQTASPSDGSDGIFGEKKDDSQAAQDGSDPDKSPWPVSSALTARLRRLVTIYQRCNRKELCRPEILGPGNQGYWVQEEVFRRTSEMDLINKEAQKRWTRREQADFYRTVSSFGVVYDQEKKAFDWTQFRIISRLDKKSDESLEHYFYSFVAMCRNVCRLPAWKDDGPPDASIYVEPITEERAAKTLYRIELLRKVREQVLMCPQLHERLQLCRPSLYLPVWWECGKHDRDLLIGTAKHGLNRTDYYIMNDPQLSFLDAYRNYAQHKRTDTQAPGSLCCLYQSNSKLYESLTYTPVSRTSESLESEPENLMRMESRDDHLCLPEGGLPDITCENFVSKVQEVISLDHDENLLPESLENMIYGKTGLSQEPHSFQEAPTTNTQSRKNTITISASRNESCQPPGIEAEITSASSLMSSLEAGVAKMNIKNGKHLLVSISKEGEPCCSETGRRPETIGHREAKCLVSPTLDTGHESGFVDLCSLSVYDPKRNFSSDQQLIDLLENKSLESKLILNQSDEEEEENEDETLAIVASATEKPEVLDFPKPTVNIPRGKNLSFHQDEAKKGRLEVVSKTAGPQRVFPPPANQCHCKHIERWAHGLGSEDSEVEKPKAYQPDLYRSKANNSTVEGETAVIPTEPFKLKHELLKEPWKESSEGGKSFSMYAPEGSEPKPEDMDFENKDDYEKDGTCLSQDYPGKYSEEESKSSASGIAGDLGEEAQEVRAPTIAQLLQEKTLYSFSEWPKDRVIINRLDNICHVVLKGKWPCSHQYEPSGALPTPVLSSSAGSRSSLSEPEATEHGFSNGAALAAQIQKESFLAPVFTKDEQKHRRPYEFEVERDAKARSLEEYSATHGRPPIVLNGWHGESAIDLSCSSEGSPGATSPFPVSASTPKIGAISSLQGALGMDLSGILQAGLIHPVTGQIVNGSLRRDDAAMRRRRGRRKHIEGGMDLIFLKEQTLQAGILEVHEDAGQTTLSTTHPEVPGATSSAPEPTAAASSQAEKAVPSKSLLDWLRQQADYSLDVPGFGTSFSDKPKQRRPRCKEPGKLDISSLGGEERVPAVPKEPGLRGFLPESKFNHTLAEPVLRDAGPRRRGRRPRNELLKAPAIVADSPSGMGPLFMNGLIAGMDLVGLQNVRNIPGIPLTGLVGFPAGFATMPTGEEVKNTLSMLPMMLPGMAAVPQMFGVGGLLNTPMATTCTTTASASLASTKSGTSATEKSTEDKLSGHDVNTDALVDDKPGPSPFSDQSEPTITTSSPVAFNPFLIPGVSPGLIYPSMFLSPGMGMALPAMQQARHSEMVGLETQKRKKKKTKGDSPTQEPASVCEKEPGSDQNCTESSATVSPEREHVAQAREEGLKDSNEDTN.

4 stretches are compositionally biased toward basic and acidic residues: residues 1–12, 100–115, 122–151, and 158–171; these read MKMKIQKKEKQL, EPGEQEGTKGSKDREP, EPKEPKEPRRAKEPKRAKEPKETKQKDGVK, and EASGTKEGKEKRSC. Disordered regions lie at residues 1-52 and 66-243; these read MKMK…EEAA and EEAD…QVKR. Positions 1–746 are required for DNA-dependent ATPase activity; that stretch reads MKMKIQKKEK…MMELRKCCNH (746 aa). Residues 214 to 224 show a composition bias toward low complexity; sequence SLPNPSLQSPE. 2 consecutive Chromo domains span residues 291 to 342 and 374 to 438; these read NIIE…KDPR and IEID…KHVE. In terms of domain architecture, Helicase ATP-binding spans 472–646; that stretch reads LFNWYNRKNC…FSLLNFLEPS (175 aa). Residue 485–492 participates in ATP binding; that stretch reads DEMGLGKT. The DEAH box signature appears at 597 to 600; it reads DEAH. Residues 786–955 enclose the Helicase C-terminal domain; the sequence is LIDKLLPKLI…LSKMEVEDLL (170 aa). The segment at 1318-1389 is disordered; it reads SLSAEQGVTD…SDPDKSPWPV (72 aa). Positions 1320 to 1329 are enriched in polar residues; sequence SAEQGVTDGT. Positions 1332-1350 are enriched in basic and acidic residues; it reads IPERGNIDKEDSAEDKLDG. Positions 1448 to 1502 constitute a Myb-like domain; it reads RWTRREQADFYRTVSSFGVVYDQEKKAFDWTQFRIISRLDKKSDESLEHYFYSFV. S1865 is subject to Phosphoserine. Disordered stretches follow at residues 1951–1978, 1997–2059, 2124–2147, 2321–2350, 2373–2419, 2550–2602, and 2641–2711; these read SEDSEVEKPKAYQPDLYRSKANNSTVEG, EPWK…ASGI, LPTPVLSSSAGSRSSLSEPEATEH, TTLSTTHPEVPGATSSAPEPTAAASSQAEK, GFGT…RGFL, SASL…ITTS, and RHSE…EDTN. A compositionally biased stretch (basic and acidic residues) spans 2017–2036; sequence SEPKPEDMDFENKDDYEKDG. Low complexity-rich tracts occupy residues 2130-2140 and 2333-2349; these read SSSAGSRSSLS and ATSSAPEPTAAASSQAE. The span at 2550-2563 shows a compositional bias: low complexity; it reads SASLASTKSGTSAT. A compositionally biased stretch (basic and acidic residues) spans 2565 to 2586; that stretch reads KSTEDKLSGHDVNTDALVDDKP. Polar residues-rich tracts occupy residues 2591 to 2602 and 2677 to 2688; these read FSDQSEPTITTS and SDQNCTESSATV. The segment covering 2690–2711 has biased composition (basic and acidic residues); that stretch reads PEREHVAQAREEGLKDSNEDTN.

The protein belongs to the SNF2/RAD54 helicase family. Interacts with NFE2L2; involved in activation of the transcription. In terms of tissue distribution, widely expressed.

The protein localises to the nucleus. Its subcellular location is the nucleoplasm. It carries out the reaction ATP + H2O = ADP + phosphate + H(+). In terms of biological role, ATP-dependent chromatin-remodeling factor. Regulates transcription by disrupting nucleosomes in a largely non-sliding manner which strongly increases the accessibility of chromatin. Activates transcription of specific genes in response to oxidative stress through interaction with NFE2L2. The chain is Chromodomain-helicase-DNA-binding protein 6 (Chd6) from Mus musculus (Mouse).